We begin with the raw amino-acid sequence, 132 residues long: Small ribosomal subunit protein uS8 (132 aa).

Belongs to the universal ribosomal protein uS8 family. As to quaternary structure, part of the 30S ribosomal subunit. Contacts proteins S5 and S12.

Functionally, one of the primary rRNA binding proteins, it binds directly to 16S rRNA central domain where it helps coordinate assembly of the platform of the 30S subunit. The polypeptide is Small ribosomal subunit protein uS8 (Streptococcus uberis (strain ATCC BAA-854 / 0140J)).